The chain runs to 453 residues: Septin-10 (453 aa).

The tract at residues lysine 18–serine 43 is disordered. Positions serine 27–proline 37 are enriched in basic and acidic residues. The Septin-type G domain occupies glutamine 62 to glutamate 328. Residues glycine 72–serine 79 form a G1 motif region. Residues glycine 72–serine 79, glycine 127, lysine 208–glutamate 216, glycine 262, and arginine 277 each bind GTP. The segment at asparagine 124–glycine 127 is G3 motif. The tract at residues alanine 207–aspartate 210 is G4 motif. Positions threonine 433 to methionine 453 are disordered. A compositionally biased stretch (basic and acidic residues) spans leucine 441 to methionine 453.

This sequence belongs to the TRAFAC class TrmE-Era-EngA-EngB-Septin-like GTPase superfamily. Septin GTPase family. In terms of assembly, septins polymerize into heterooligomeric protein complexes that form filaments, and can associate with cellular membranes, actin filaments and microtubules. GTPase activity is required for filament formation. Interacts with ADGB. In terms of processing, proteolytically cleaved in vitro in a calmodulin-dependent manner.

It is found in the cytoplasm. The protein resides in the cytoskeleton. The protein localises to the cell projection. Its subcellular location is the cilium. It localises to the flagellum. Functionally, filament-forming cytoskeletal GTPase. May play a role in cytokinesis (Potential). This is Septin-10 from Bos taurus (Bovine).